Reading from the N-terminus, the 60-residue chain is Large ribosomal subunit protein uL30 (60 aa).

It belongs to the universal ribosomal protein uL30 family. Part of the 50S ribosomal subunit.

The sequence is that of Large ribosomal subunit protein uL30 from Aromatoleum aromaticum (strain DSM 19018 / LMG 30748 / EbN1) (Azoarcus sp. (strain EbN1)).